Consider the following 234-residue polypeptide: UPF0173 metal-dependent hydrolase Atu1317 (234 aa).

It belongs to the UPF0173 family.

The chain is UPF0173 metal-dependent hydrolase Atu1317 from Agrobacterium fabrum (strain C58 / ATCC 33970) (Agrobacterium tumefaciens (strain C58)).